Here is a 205-residue protein sequence, read N- to C-terminus: Holliday junction branch migration complex subunit RuvA (205 aa).

The domain I stretch occupies residues 1–64 (MIGRLSGILV…EDAQLLYGFI (64 aa)). Positions 65–143 (TKQERALFRL…SLLEASAGSE (79 aa)) are domain II. Residues 144–156 (REFMLQSNYTPAA) are flexible linker. The tract at residues 157 to 205 (AVDSAEEDAISALLSLGYKPAQASKSVSAAFKEGMSSETLIKAALKSML) is domain III.

It belongs to the RuvA family. In terms of assembly, homotetramer. Forms an RuvA(8)-RuvB(12)-Holliday junction (HJ) complex. HJ DNA is sandwiched between 2 RuvA tetramers; dsDNA enters through RuvA and exits via RuvB. An RuvB hexamer assembles on each DNA strand where it exits the tetramer. Each RuvB hexamer is contacted by two RuvA subunits (via domain III) on 2 adjacent RuvB subunits; this complex drives branch migration. In the full resolvosome a probable DNA-RuvA(4)-RuvB(12)-RuvC(2) complex forms which resolves the HJ.

Its subcellular location is the cytoplasm. Its function is as follows. The RuvA-RuvB-RuvC complex processes Holliday junction (HJ) DNA during genetic recombination and DNA repair, while the RuvA-RuvB complex plays an important role in the rescue of blocked DNA replication forks via replication fork reversal (RFR). RuvA specifically binds to HJ cruciform DNA, conferring on it an open structure. The RuvB hexamer acts as an ATP-dependent pump, pulling dsDNA into and through the RuvAB complex. HJ branch migration allows RuvC to scan DNA until it finds its consensus sequence, where it cleaves and resolves the cruciform DNA. The polypeptide is Holliday junction branch migration complex subunit RuvA (Shewanella frigidimarina (strain NCIMB 400)).